The chain runs to 623 residues: Bifunctional methionine biosynthesis protein MetXA/MetW (623 aa).

The span at methionine 1–serine 17 shows a compositional bias: polar residues. The disordered stretch occupies residues methionine 1–aspartate 30. The 309-residue stretch at asparagine 77–leucine 385 folds into the AB hydrolase-1 domain. Serine 183 functions as the Nucleophile in the catalytic mechanism. Residue arginine 253 participates in substrate binding. Residues aspartate 348 and histidine 381 contribute to the active site. Substrate is bound at residue aspartate 382. Residues asparagine 417–histidine 619 form a metW region.

The protein in the N-terminal section; belongs to the AB hydrolase superfamily. MetX family. In the C-terminal section; belongs to the MetW family. In terms of assembly, homodimer.

The protein localises to the cytoplasm. The catalysed reaction is L-homoserine + acetyl-CoA = O-acetyl-L-homoserine + CoA. It participates in amino-acid biosynthesis; L-methionine biosynthesis via de novo pathway; O-acetyl-L-homoserine from L-homoserine: step 1/1. Transfers an acetyl group from acetyl-CoA to L-homoserine, forming acetyl-L-homoserine. The protein is Bifunctional methionine biosynthesis protein MetXA/MetW of Rhodopirellula baltica (strain DSM 10527 / NCIMB 13988 / SH1).